A 227-amino-acid polypeptide reads, in one-letter code: PKHD-type hydroxylase GOX0559 (227 aa).

A Fe2OG dioxygenase domain is found at 78–178 (RVYPPLFNRY…RWASFFWSQS (101 aa)). 3 residues coordinate Fe cation: histidine 96, aspartate 98, and histidine 159. Arginine 169 contacts 2-oxoglutarate.

Requires Fe(2+) as cofactor. It depends on L-ascorbate as a cofactor.

The protein is PKHD-type hydroxylase GOX0559 of Gluconobacter oxydans (strain 621H) (Gluconobacter suboxydans).